We begin with the raw amino-acid sequence, 211 residues long: ATP phosphoribosyltransferase (211 aa).

Belongs to the ATP phosphoribosyltransferase family. Short subfamily. Heteromultimer composed of HisG and HisZ subunits.

The protein localises to the cytoplasm. The catalysed reaction is 1-(5-phospho-beta-D-ribosyl)-ATP + diphosphate = 5-phospho-alpha-D-ribose 1-diphosphate + ATP. It participates in amino-acid biosynthesis; L-histidine biosynthesis; L-histidine from 5-phospho-alpha-D-ribose 1-diphosphate: step 1/9. Catalyzes the condensation of ATP and 5-phosphoribose 1-diphosphate to form N'-(5'-phosphoribosyl)-ATP (PR-ATP). Has a crucial role in the pathway because the rate of histidine biosynthesis seems to be controlled primarily by regulation of HisG enzymatic activity. This Pseudomonas syringae pv. tomato (strain ATCC BAA-871 / DC3000) protein is ATP phosphoribosyltransferase.